A 536-amino-acid chain; its full sequence is uncharacterized protein (536 aa).

The segment at 71-98 (LFVIVKSGCSCPSGRICRHMLAVFLYVY) adopts an SWIM-type zinc-finger fold. Positions 482-528 (YKEAARYLKKLRTLYKKAKKQKVWERYIQLLSSHYKRLRALQEELQK) form a coiled coil.

This is an uncharacterized protein from Bacillus subtilis (strain 168).